The chain runs to 202 residues: Crossover junction endodeoxyribonuclease RuvC (202 aa).

Catalysis depends on residues Asp-7, Glu-68, and Asp-141. 3 residues coordinate Mg(2+): Asp-7, Glu-68, and Asp-141.

Belongs to the RuvC family. Homodimer which binds Holliday junction (HJ) DNA. The HJ becomes 2-fold symmetrical on binding to RuvC with unstacked arms; it has a different conformation from HJ DNA in complex with RuvA. In the full resolvosome a probable DNA-RuvA(4)-RuvB(12)-RuvC(2) complex forms which resolves the HJ. It depends on Mg(2+) as a cofactor.

It localises to the cytoplasm. It carries out the reaction Endonucleolytic cleavage at a junction such as a reciprocal single-stranded crossover between two homologous DNA duplexes (Holliday junction).. In terms of biological role, the RuvA-RuvB-RuvC complex processes Holliday junction (HJ) DNA during genetic recombination and DNA repair. Endonuclease that resolves HJ intermediates. Cleaves cruciform DNA by making single-stranded nicks across the HJ at symmetrical positions within the homologous arms, yielding a 5'-phosphate and a 3'-hydroxyl group; requires a central core of homology in the junction. The consensus cleavage sequence is 5'-(A/T)TT(C/G)-3'. Cleavage occurs on the 3'-side of the TT dinucleotide at the point of strand exchange. HJ branch migration catalyzed by RuvA-RuvB allows RuvC to scan DNA until it finds its consensus sequence, where it cleaves and resolves the cruciform DNA. In Clavibacter michiganensis subsp. michiganensis (strain NCPPB 382), this protein is Crossover junction endodeoxyribonuclease RuvC.